Consider the following 1077-residue polypeptide: FKBP12-associated protein 1 homolog (1077 aa).

The interval 1 to 173 is disordered; that stretch reads METSKNPSDL…MPKNSKEIKK (173 aa). Over residues 15–29 the composition is skewed to basic residues; that stretch reads ANVKKNRRRFQKSQK. At serine 33 the chain carries Phosphoserine. The segment covering 52–64 has biased composition (basic and acidic residues); that stretch reads EEVKTSLKEDSSK. Over residues 76 to 87 the composition is skewed to polar residues; that stretch reads PTSSVQLNVSKN. Basic and acidic residues predominate over residues 100–116; sequence SSKDEELRKHAKGEGKR. A compositionally biased stretch (low complexity) spans 136–149; the sequence is SSNSSQETSSSKGS. A compositionally biased stretch (basic and acidic residues) spans 153–173; that stretch reads KSERSREAKSRMPKNSKEIKK. Residues 197–247 form an RING-type; atypical zinc finger; sequence CSVCTDTINPSTSIWSCGTCYHVFHLSCIRKWCKNSIEQRNEDAWRCPYCQ. 8 NF-X1-type zinc fingers span residues 290–308, 348–367, 420–441, 485–503, 541–558, 595–614, 708–729, and 738–760; these read CEHPCPLLCHPGPCPPCTA, CGEHTCKKRCHSGLCGACFE, CGLHKCSKTCHPISETRAHCPF, CGHRCKYKCHLGSCGTCSE, CGRHQCNKKCCSGYSKAQ, CGNHFCQHMCHRGPCPRCLE, CKTHFCEKLCHPDGECESSCKK, and CEHVCQSPCHAGHPCDERIPCKA. The R3H domain maps to 835 to 897; sequence SDFADEVESL…KRNVMVYNKG (63 aa).

It belongs to the NFX1 family.

It localises to the cytoplasm. The protein resides in the golgi apparatus. Its subcellular location is the nucleus. May play a role in transcription regulation. The sequence is that of FKBP12-associated protein 1 homolog (fap1) from Schizosaccharomyces pombe (strain 972 / ATCC 24843) (Fission yeast).